Consider the following 146-residue polypeptide: D-aminoacyl-tRNA deacylase (146 aa).

Positions 137–138 (GP) match the Gly-cisPro motif, important for rejection of L-amino acids motif.

The protein belongs to the DTD family. In terms of assembly, homodimer.

Its subcellular location is the cytoplasm. The catalysed reaction is glycyl-tRNA(Ala) + H2O = tRNA(Ala) + glycine + H(+). The enzyme catalyses a D-aminoacyl-tRNA + H2O = a tRNA + a D-alpha-amino acid + H(+). Functionally, an aminoacyl-tRNA editing enzyme that deacylates mischarged D-aminoacyl-tRNAs. Also deacylates mischarged glycyl-tRNA(Ala), protecting cells against glycine mischarging by AlaRS. Acts via tRNA-based rather than protein-based catalysis; rejects L-amino acids rather than detecting D-amino acids in the active site. By recycling D-aminoacyl-tRNA to D-amino acids and free tRNA molecules, this enzyme counteracts the toxicity associated with the formation of D-aminoacyl-tRNA entities in vivo and helps enforce protein L-homochirality. This is D-aminoacyl-tRNA deacylase from Variovorax paradoxus (strain S110).